The primary structure comprises 311 residues: Olfactory receptor 10G7 (311 aa).

Over 1–23 (MSNATLLTAFILTGLPHAPGLDA) the chain is Extracellular. The N-linked (GlcNAc...) asparagine glycan is linked to Asn3. The chain crosses the membrane as a helical span at residues 24-44 (PLFGIFLVVYVLTVLGNLLIL). Residues 45 to 52 (LVIRVDSH) lie on the Cytoplasmic side of the membrane. A helical transmembrane segment spans residues 53–73 (LHTPMYYFLTNLSFIDMWFST). At 74–98 (VTVPKMLMTLVSPSGRTISFHSCVA) the chain is on the extracellular side. Cys96 and Cys188 are disulfide-bonded. A helical transmembrane segment spans residues 99-119 (QLYFFHFLGSTECFLYTVMSY). At 120–138 (DRYLAISYPLRYTNMMTGR) the chain is on the cytoplasmic side. A helical transmembrane segment spans residues 139-159 (SCALLATGTWLSGSLHSAVQT). The Extracellular portion of the chain corresponds to 160 to 196 (ILTFHLPYCGPNQIQHYFCDAPPILKLACADTSANEM). A helical transmembrane segment spans residues 197–216 (VIFVNIGLVASGCFVLIVLS). Residues 217–236 (YVSIVCSILRIRTSEGRHRA) are Cytoplasmic-facing. Residues 237-257 (FQTCASHCIVVLCFFGPGLFI) form a helical membrane-spanning segment. Residues 258-268 (YLRPGSRDALH) lie on the Extracellular side of the membrane. Residues 269-289 (GVVAVFYTTLTPLFNPVVYTL) form a helical membrane-spanning segment. Residues 290–311 (RNKEVKKALLKLKNGSVFAQGE) are Cytoplasmic-facing.

Belongs to the G-protein coupled receptor 1 family.

It localises to the cell membrane. In terms of biological role, odorant receptor. The protein is Olfactory receptor 10G7 (OR10G7) of Homo sapiens (Human).